The following is a 567-amino-acid chain: Geranylgeranyl transferase type-2 subunit alpha (567 aa).

6 PFTA repeats span residues 44–78, 88–122, 124–158, 159–193, 207–241, and 363–397; these read LDES…HLET, LVKA…RLPE, NWAR…QAAV, APAE…QLHP, VLLK…RAEP, and VLQS…ALDP. At S98 the chain carries Phosphoserine. LRR repeat units lie at residues 442–463, 464–486, 487–508, 509–530, and 534–555; these read DVRV…EQLL, LVTH…AALR, CLEV…ANLP, RLQE…QPLV, and RLVL…QERL.

This sequence belongs to the protein prenyltransferase subunit alpha family. Heterotrimer composed of RABGGTA, RABGGTB and CHM; within this trimer, RABGGTA and RABGGTB form the catalytic component B, while CHM (component A) mediates peptide substrate binding. The Rab GGTase dimer (RGGT) interacts with CHM (component A) prior to Rab protein binding; the association is stabilized by geranylgeranyl pyrophosphate (GGpp). The CHM:RGGT:Rab complex is destabilized by GGpp. Interacts with non-phosphorylated form of RAB8A; phosphorylation of RAB8A at 'Thr-72' disrupts this interaction. In terms of tissue distribution, most abundant in the heart, brain, spleen and liver. Less in the lung, muscle, kidney and testis; in these tissues less abundant than the beta subunit.

The enzyme catalyses geranylgeranyl diphosphate + L-cysteinyl-[protein] = S-geranylgeranyl-L-cysteinyl-[protein] + diphosphate. The enzymatic reaction requires the aid of a Rab escort protein (also called component A), such as CHM. Its function is as follows. Catalyzes the transfer of a geranylgeranyl moiety from geranylgeranyl diphosphate to both cysteines of Rab proteins with the C-terminal sequence -XXCC, -XCXC and -CCXX, such as RAB1A, RAB3A, RAB5A and RAB7A. In Rattus norvegicus (Rat), this protein is Geranylgeranyl transferase type-2 subunit alpha (Rabggta).